Consider the following 91-residue polypeptide: Small ribosomal subunit protein bS20 (91 aa).

Positions 1–18 (MPLHKSAEKRLRQSERRN) are enriched in basic and acidic residues. Residues 1 to 25 (MPLHKSAEKRLRQSERRNARNRARK) are disordered.

It belongs to the bacterial ribosomal protein bS20 family.

Binds directly to 16S ribosomal RNA. This is Small ribosomal subunit protein bS20 from Chlorobium luteolum (strain DSM 273 / BCRC 81028 / 2530) (Pelodictyon luteolum).